A 209-amino-acid polypeptide reads, in one-letter code: Ribosomal RNA large subunit methyltransferase E (209 aa).

Gly-63, Trp-65, Asp-83, Asp-99, and Asp-124 together coordinate S-adenosyl-L-methionine. Lys-164 functions as the Proton acceptor in the catalytic mechanism.

This sequence belongs to the class I-like SAM-binding methyltransferase superfamily. RNA methyltransferase RlmE family.

The protein localises to the cytoplasm. The enzyme catalyses uridine(2552) in 23S rRNA + S-adenosyl-L-methionine = 2'-O-methyluridine(2552) in 23S rRNA + S-adenosyl-L-homocysteine + H(+). Specifically methylates the uridine in position 2552 of 23S rRNA at the 2'-O position of the ribose in the fully assembled 50S ribosomal subunit. This Escherichia coli O81 (strain ED1a) protein is Ribosomal RNA large subunit methyltransferase E.